Consider the following 101-residue polypeptide: Small ribosomal subunit protein uS14 (101 aa).

Belongs to the universal ribosomal protein uS14 family. As to quaternary structure, part of the 30S ribosomal subunit. Contacts proteins S3 and S10.

Binds 16S rRNA, required for the assembly of 30S particles and may also be responsible for determining the conformation of the 16S rRNA at the A site. In Shewanella frigidimarina (strain NCIMB 400), this protein is Small ribosomal subunit protein uS14.